Here is a 156-residue protein sequence, read N- to C-terminus: Ribosomal RNA large subunit methyltransferase H (156 aa).

Residues Leu73, Gly104, and 123 to 128 (LSALTL) each bind S-adenosyl-L-methionine.

This sequence belongs to the RNA methyltransferase RlmH family. As to quaternary structure, homodimer.

The protein resides in the cytoplasm. It carries out the reaction pseudouridine(1915) in 23S rRNA + S-adenosyl-L-methionine = N(3)-methylpseudouridine(1915) in 23S rRNA + S-adenosyl-L-homocysteine + H(+). Specifically methylates the pseudouridine at position 1915 (m3Psi1915) in 23S rRNA. This is Ribosomal RNA large subunit methyltransferase H from Shewanella sp. (strain ANA-3).